A 228-amino-acid polypeptide reads, in one-letter code: Leucyl/phenylalanyl-tRNA--protein transferase (228 aa).

It belongs to the L/F-transferase family.

The protein localises to the cytoplasm. It carries out the reaction N-terminal L-lysyl-[protein] + L-leucyl-tRNA(Leu) = N-terminal L-leucyl-L-lysyl-[protein] + tRNA(Leu) + H(+). It catalyses the reaction N-terminal L-arginyl-[protein] + L-leucyl-tRNA(Leu) = N-terminal L-leucyl-L-arginyl-[protein] + tRNA(Leu) + H(+). The catalysed reaction is L-phenylalanyl-tRNA(Phe) + an N-terminal L-alpha-aminoacyl-[protein] = an N-terminal L-phenylalanyl-L-alpha-aminoacyl-[protein] + tRNA(Phe). Its function is as follows. Functions in the N-end rule pathway of protein degradation where it conjugates Leu, Phe and, less efficiently, Met from aminoacyl-tRNAs to the N-termini of proteins containing an N-terminal arginine or lysine. The polypeptide is Leucyl/phenylalanyl-tRNA--protein transferase (Sulfurimonas denitrificans (strain ATCC 33889 / DSM 1251) (Thiomicrospira denitrificans (strain ATCC 33889 / DSM 1251))).